We begin with the raw amino-acid sequence, 158 residues long: Snaclec crotocetin-1 (158 aa).

The N-terminal stretch at 1–23 is a signal peptide; it reads MGRFIFVSFGLLVVFLSLSGTGA. 3 disulfide bridges follow: C27–C38, C55–C152, and C127–C144. One can recognise a C-type lectin domain in the interval 34-153; it reads YDQYCYRVIK…CEEKNLFVCK (120 aa).

This sequence belongs to the snaclec family. Heterodimer; disulfide-linked. Expressed by the venom gland.

The protein resides in the secreted. Functionally, interferes with one step of hemostasis (modulation of platelet aggregation, or coagulation cascade, for example). The polypeptide is Snaclec crotocetin-1 (Crotalus durissus terrificus (South American rattlesnake)).